The following is a 905-amino-acid chain: DNA-directed RNA polymerase subunit Rpo1N (905 aa).

Zn(2+)-binding residues include C60, C63, C70, H73, C100, C103, C147, and C150. 3 residues coordinate Mg(2+): D461, D463, and D465.

Belongs to the RNA polymerase beta' chain family. Part of the RNA polymerase complex. Mg(2+) is required as a cofactor. The cofactor is Zn(2+).

The protein localises to the cytoplasm. It carries out the reaction RNA(n) + a ribonucleoside 5'-triphosphate = RNA(n+1) + diphosphate. In terms of biological role, DNA-dependent RNA polymerase (RNAP) catalyzes the transcription of DNA into RNA using the four ribonucleoside triphosphates as substrates. Forms the clamp head domain. The chain is DNA-directed RNA polymerase subunit Rpo1N from Thermococcus celer.